Reading from the N-terminus, the 230-residue chain is Large ribosomal subunit protein uL1c (230 aa).

Belongs to the universal ribosomal protein uL1 family. As to quaternary structure, part of the 50S ribosomal subunit.

The protein localises to the plastid. It is found in the chloroplast. Binds directly to 23S rRNA. Might be involved in E site tRNA release (Potential). The sequence is that of Large ribosomal subunit protein uL1c (rpl1) from Thalassiosira pseudonana (Marine diatom).